A 504-amino-acid polypeptide reads, in one-letter code: Anaerobic nitric oxide reductase transcription regulator NorR (504 aa).

D57 carries the 4-aspartylphosphate modification. In terms of domain architecture, Sigma-54 factor interaction spans 187 to 416; the sequence is MIGLSPGMTQ…LEHAIHRAVV (230 aa). ATP is bound by residues 215 to 222 and 278 to 287; these read GETGTGKE and ADNGTLFLDE. The segment at residues 479 to 498 is a DNA-binding region (H-T-H motif); it reads WAACARMLETDVANLHRLAK.

It functions in the pathway nitrogen metabolism; nitric oxide reduction. Required for the expression of anaerobic nitric oxide (NO) reductase, acts as a transcriptional activator for at least the norVW operon. Activation also requires sigma-54. This Shigella flexneri serotype 5b (strain 8401) protein is Anaerobic nitric oxide reductase transcription regulator NorR.